The following is a 659-amino-acid chain: Threonine--tRNA ligase (659 aa).

The TGS domain maps to 1 to 61 (MSAVPELRIT…ADGDVVEEIR (61 aa)). Residues 260–555 (DHRKLGVELD…LLEHYAGAFP (296 aa)) form a catalytic region. Cys353, His404, and His532 together coordinate Zn(2+).

The protein belongs to the class-II aminoacyl-tRNA synthetase family. As to quaternary structure, homodimer. The cofactor is Zn(2+).

It is found in the cytoplasm. The catalysed reaction is tRNA(Thr) + L-threonine + ATP = L-threonyl-tRNA(Thr) + AMP + diphosphate + H(+). Its function is as follows. Catalyzes the attachment of threonine to tRNA(Thr) in a two-step reaction: L-threonine is first activated by ATP to form Thr-AMP and then transferred to the acceptor end of tRNA(Thr). Also edits incorrectly charged L-seryl-tRNA(Thr). The polypeptide is Threonine--tRNA ligase (Thermobifida fusca (strain YX)).